Consider the following 237-residue polypeptide: NADPH-dependent FMN reductase ArsH (237 aa).

FMN contacts are provided by residues 39-46 and 102-107; these read SNRECSYS and SPERHG.

This sequence belongs to the ArsH family. As to quaternary structure, homotetramer. Requires FMN as cofactor.

Functionally, has NADPH-dependent FMN reductase activity and high NADPH-dependent ferric reductase activity with highest activity for Fe(3+) as substrate. No activity with NADH, iron trichloride, Cu(2+) or Ag(+). May be involved in cytosolic ferric iron assimilation as an NADPH-dependent ferric reductase in vivo. The chain is NADPH-dependent FMN reductase ArsH from Acidithiobacillus ferrooxidans (strain ATCC 23270 / DSM 14882 / CIP 104768 / NCIMB 8455) (Ferrobacillus ferrooxidans (strain ATCC 23270)).